The chain runs to 2564 residues: Highly reducing polyketide synthase 40 (2564 aa).

The region spanning 8-432 (PEPIAIIGMS…GTNAHVIVDR (425 aa)) is the Ketosynthase family 3 (KS3) domain. Catalysis depends on for beta-ketoacyl synthase activity residues Cys181, His317, and His358. The segment at 435–482 (EHNHSNGTNGTNGTHHHNGTNGSNGNGTNGTNGTNGTDGFHDTESISD) is disordered. Positions 439–455 (SNGTNGTNGTHHHNGTN) are enriched in low complexity. Residues 473-482 (GFHDTESISD) are compositionally biased toward basic and acidic residues. The tract at residues 580–914 (YVFGGQGAQY…SAAENMLRTL (335 aa)) is malonyl-CoA:ACP transacylase (MAT) domain. Residues 973-1113 (HELLGNLSAD…GRIRAVVDQG (141 aa)) are N-terminal hotdog fold. The tract at residues 973–1280 (HELLGNLSAD…GLRTAQLPSD (308 aa)) is dehydratase (DH) domain. In terms of domain architecture, PKS/mFAS DH spans 973–1283 (HELLGNLSAD…TAQLPSDVVN (311 aa)). Catalysis depends on His1005, which acts as the Proton acceptor; for dehydratase activity. Residues 1130-1283 (AASVPHHITS…TAQLPSDVVN (154 aa)) are C-terminal hotdog fold. Asp1199 functions as the Proton donor; for dehydratase activity in the catalytic mechanism. A methyltransferase (CMet) domain region spans residues 1451–1556 (LEVGGGTASA…RQLLRPGGTL (106 aa)). An enoyl reductase (ER) domain region spans residues 1854 to 2167 (GLLETFRWVD…AGKHMGKVIL (314 aa)). The interval 2191–2370 (ATYLLVGGFG…SFAIDVGVVS (180 aa)) is ketoreductase (KR) domain. One can recognise a Carrier domain in the interval 2472–2549 (EALDAVGQAV…ELIHLVAGKS (78 aa)). Ser2509 bears the O-(pantetheine 4'-phosphoryl)serine mark.

It functions in the pathway secondary metabolite biosynthesis. Functionally, highly reducing polyketide synthase; part of the gene cluster that mediates the biosynthesis of the lipopeptides W493 A and B. W493 A and B consist of six amino acid residues D-allo-thr, L-Ala, D-Ala, L-Gln, D-Tyr, and L-Val/L-Ile linked to a 3-hydroxy-4-methyltetradecanoic acid polyketide chain. The biosynthesis starts with formation of the linear polyketide chain by the highly reducing polyketide synthase PKS40. The gene cluster contains a putative acyl-CoA ligase (FPSE_09184) for formation of a CoA thioester polyketide. The thiol bond could be hydrolyzed by the putative thioesterase (FPSE_09186) and then accepted by the first T domain in module 1 of NRPS32. The second T domain is responsible for accepting a threonine, which is adenylated by the A domain and epimerized to the D-allo-threonine formed by the E domain. The five successive modules incorporate Ala, Ala, Gln, Tyr, and Val/Ile into the final product, which is released by cyclization. The protein is Highly reducing polyketide synthase 40 of Fusarium pseudograminearum (strain CS3096) (Wheat and barley crown-rot fungus).